We begin with the raw amino-acid sequence, 262 residues long: Type III pantothenate kinase (262 aa).

Residue 6–13 (DVGNTNAV) coordinates ATP. Substrate is bound by residues Tyr100 and 107–110 (GADR). Residue Asp109 is the Proton acceptor of the active site. A K(+)-binding site is contributed by Asp129. Residue Thr132 participates in ATP binding. Thr184 lines the substrate pocket.

Belongs to the type III pantothenate kinase family. In terms of assembly, homodimer. The cofactor is NH4(+). It depends on K(+) as a cofactor.

It is found in the cytoplasm. It catalyses the reaction (R)-pantothenate + ATP = (R)-4'-phosphopantothenate + ADP + H(+). It participates in cofactor biosynthesis; coenzyme A biosynthesis; CoA from (R)-pantothenate: step 1/5. In terms of biological role, catalyzes the phosphorylation of pantothenate (Pan), the first step in CoA biosynthesis. The protein is Type III pantothenate kinase of Bacillus cereus (strain B4264).